We begin with the raw amino-acid sequence, 194 residues long: NADH-ubiquinone oxidoreductase subunit NUO2 (194 aa).

Its function is as follows. Fungal-specific subunit of the mitochondrial membrane respiratory chain NADH dehydrogenase (Complex I). Complex I functions in the transfer of electrons from NADH to the respiratory chain. The immediate electron acceptor for the enzyme is believed to be ubiquinone. Plays a role in cell wall integrity and is involved in osmotic and oxidative resistance, yeast to hypha transition, and virulence via providing the ability to damage and invade host cells such as oral epithelial cells. This Candida albicans (strain SC5314 / ATCC MYA-2876) (Yeast) protein is NADH-ubiquinone oxidoreductase subunit NUO2.